The following is a 415-amino-acid chain: Actin-like protein 9 (415 aa).

The interval 1 to 22 (MDVNGHPKFQPSPETDGPLPLT) is disordered.

This sequence belongs to the actin family. In terms of assembly, interacts with ACTL7A.

The protein localises to the cytoplasmic vesicle. It localises to the secretory vesicle. It is found in the acrosome. The protein resides in the cytoplasm. Its subcellular location is the cytoskeleton. The protein localises to the perinuclear theca. Functionally, testis-specic protein that plays an important role in fusion of proacrosomal vesicles and perinuclear theca formation. The chain is Actin-like protein 9 (Actl9) from Mus musculus (Mouse).